A 375-amino-acid polypeptide reads, in one-letter code: Succinyl-diaminopimelate desuccinylase (375 aa).

Zn(2+) is bound at residue H66. D68 is an active-site residue. D99 lines the Zn(2+) pocket. The active-site Proton acceptor is E133. Zn(2+) is bound by residues E134, E162, and H348.

It belongs to the peptidase M20A family. DapE subfamily. In terms of assembly, homodimer. Requires Zn(2+) as cofactor. The cofactor is Co(2+).

The enzyme catalyses N-succinyl-(2S,6S)-2,6-diaminopimelate + H2O = (2S,6S)-2,6-diaminopimelate + succinate. The protein operates within amino-acid biosynthesis; L-lysine biosynthesis via DAP pathway; LL-2,6-diaminopimelate from (S)-tetrahydrodipicolinate (succinylase route): step 3/3. In terms of biological role, catalyzes the hydrolysis of N-succinyl-L,L-diaminopimelic acid (SDAP), forming succinate and LL-2,6-diaminopimelate (DAP), an intermediate involved in the bacterial biosynthesis of lysine and meso-diaminopimelic acid, an essential component of bacterial cell walls. In Shigella dysenteriae serotype 1 (strain Sd197), this protein is Succinyl-diaminopimelate desuccinylase.